The primary structure comprises 660 residues: Phosphatidylinositol-3-phosphate phosphatase MTMR7 (660 aa).

The region spanning 126-504 is the Myotubularin phosphatase domain; the sequence is GWVLIDLSEE…FMYKFWSGMY (379 aa). A 1,2-diacyl-sn-glycero-3-phospho-(1D-myo-inositol-3-phosphate)-binding residues include Asn-250, Asn-275, and Ile-276. Cys-338 functions as the Phosphocysteine intermediate in the catalytic mechanism. Residues Ser-339, Asp-340, Gly-341, Trp-342, Asp-343, Arg-344, and Arg-384 each coordinate a 1,2-diacyl-sn-glycero-3-phospho-(1D-myo-inositol-3-phosphate). Residues 521–551 are a coiled coil; that stretch reads LMAVKEETQQLEEELEALEERLEKIQKVQLN. Residues 554–660 form a disordered region; it reads KVKSKQSEPS…DSDEAVFLTA (107 aa). Residues 566 to 596 are compositionally biased toward polar residues; sequence SGFSTSDNSIANTPQDYSGNMKSFPSRSPSQ. Thr-578 bears the Phosphothreonine mark. The segment covering 641–653 has biased composition (basic and acidic residues); that stretch reads APSEDSGKDRDSD.

This sequence belongs to the protein-tyrosine phosphatase family. Non-receptor class myotubularin subfamily. Heterodimer (via C-terminus) with MTMR9 (via coiled coil domain); the interaction enhances MTMR7 catalytic activity. Does not homodimerize. Interacts with RAB1B (in GDP-bound form). In terms of tissue distribution, expressed specifically in brain.

Its subcellular location is the cytoplasm. It localises to the endomembrane system. The catalysed reaction is a 1,2-diacyl-sn-glycero-3-phospho-(1D-myo-inositol-3-phosphate) + H2O = a 1,2-diacyl-sn-glycero-3-phospho-(1D-myo-inositol) + phosphate. The enzyme catalyses 1D-myo-inositol 1,3-bisphosphate + H2O = 1D-myo-inositol 1-phosphate + phosphate. Its activity is regulated as follows. Interaction with MTMR9 increases phosphatase activity. Lipid phosphatase that specifically dephosphorylates the D-3 position of phosphatidylinositol 3-phosphate (PtdIns(3)P) and inositol 1,3-bisphosphate (Ins(1,3)P2). In Homo sapiens (Human), this protein is Phosphatidylinositol-3-phosphate phosphatase MTMR7.